Consider the following 726-residue polypeptide: Catalase-peroxidase (726 aa).

A disordered region spans residues 1–33 (MSTSDDIHNTTATGKCPFHQGGHDQSAGGGTTT). Positions 105–226 (WHGAGTYRSI…LGATEMGLIY (122 aa)) form a cross-link, tryptophyl-tyrosyl-methioninium (Trp-Tyr) (with M-252). His106 functions as the Proton acceptor in the catalytic mechanism. The tryptophyl-tyrosyl-methioninium (Tyr-Met) (with W-105) cross-link spans 226 to 252 (YVNPEGPDHSGEPLSAAAAIRATFGNM). Position 267 (His267) interacts with heme b.

It belongs to the peroxidase family. Peroxidase/catalase subfamily. As to quaternary structure, homodimer or homotetramer. It depends on heme b as a cofactor. In terms of processing, formation of the three residue Trp-Tyr-Met cross-link is important for the catalase, but not the peroxidase activity of the enzyme.

The enzyme catalyses H2O2 + AH2 = A + 2 H2O. It catalyses the reaction 2 H2O2 = O2 + 2 H2O. In terms of biological role, bifunctional enzyme with both catalase and broad-spectrum peroxidase activity. This Escherichia coli O1:K1 / APEC protein is Catalase-peroxidase.